A 518-amino-acid chain; its full sequence is MQLLGTLSWLYAIQASIGSSKAVTADYGSCHDACTLLSGTLSVELGGSHVSDYKHYPTIANGSSVASLFWAQQQQSAQPACLVHVYSPQDVATVISVSRSTNCPFAVRGGGHSDIPGASNINGGITVNMAALSNVELHESEGLARVGAGARWGDVYKELEKSNKTVVGGRLTGVGVGGLVLGGGLSHFSGLHGWACDNVRNYEVVLANGTLVIASNSSNPDLYRALRGGGNSFGVVTRFDLDVFQQGPMWGGLHVWPFQPSVTSAITRGFVEFAHNAPSDPHVSLFAGLGYKQGGFAWAVGQYDALGRVEPPIFTQFKDDVEVYGTAKIVSTARLTSLSDLADELNQSEPAGIRSRFTTATFTADAELLILIVEFFEEQVQKALDKGLDKDQRFAPMLGIQPLTQNLLRAQETRGGNVMGLRDLDAPLVVCSFGWEWSYESDDKVVIDGIKAVLDHSVSAAKEKGLYHPFKYMNYAALDQDPIESYGKENIEFLKRVRAMYDPEGVFTNLVPGGHKIN.

Residues 1 to 22 (MQLLGTLSWLYAIQASIGSSKA) form the signal peptide. The N-linked (GlcNAc...) asparagine glycan is linked to N61. The FAD-binding PCMH-type domain occupies 75–246 (QSAQPACLVH…TRFDLDVFQQ (172 aa)). At H112 the chain carries Pros-8alpha-FAD histidine. N-linked (GlcNAc...) asparagine glycans are attached at residues N163, N208, N216, and N346.

This sequence belongs to the oxygen-dependent FAD-linked oxidoreductase family. FAD is required as a cofactor.

It participates in secondary metabolite biosynthesis; terpenoid biosynthesis. FAD-dependent monooxygenase; part of the gene cluster that mediates the biosynthesis of terpestacin. The bifunctional terpene synthase tpcA converts isopentenyl diphosphate (IPP) and dimethylallyl diphosphate (DMAPP) into the sesterterpene preterpestacin I. The C-terminal prenyltransferase (PT) domain of tpcA catalyzes formation of GFPP, whereas the N-terminal terpene cyclase (TC) domain catalyzes the cyclization of GFPP into preterpestacin I. The cytochrome P450 monooxygenase tpcB then hydroxylates preterpestacin I to yield 24-hydroxypreterpstacin I (renamed as preterpestacin II) whereas the cytochrome P450 monooxygenase tpcC further hydroxylates preterpestacin II to yield 16,17-dihydroxypreterpestacin II (renamed as preterpestacin III). Finally, the FAD-dependent monooxygenase tpcD converts preterpestacin III into terpestacin. The sequence is that of FAD-dependent monooxygenase tpcD from Cochliobolus heterostrophus (strain C5 / ATCC 48332 / race O) (Southern corn leaf blight fungus).